The sequence spans 334 residues: D-alanine--D-alanine ligase (334 aa).

An ATP-grasp domain is found at 124–329 (KMWFSALGIP…FAQYLSGNIL (206 aa)). 154-209 (ALAKWGSIFIKAASQGSSVGCYRVDSIEQLASSLEEAFTFSPYVVIEKTITARELE) is a binding site for ATP. Mg(2+)-binding residues include aspartate 283, glutamate 296, and asparagine 298.

Belongs to the D-alanine--D-alanine ligase family. Mg(2+) is required as a cofactor. It depends on Mn(2+) as a cofactor.

Its subcellular location is the cytoplasm. It catalyses the reaction 2 D-alanine + ATP = D-alanyl-D-alanine + ADP + phosphate + H(+). Its pathway is cell wall biogenesis; peptidoglycan biosynthesis. In terms of biological role, cell wall formation. The polypeptide is D-alanine--D-alanine ligase (Shewanella pealeana (strain ATCC 700345 / ANG-SQ1)).